A 69-amino-acid polypeptide reads, in one-letter code: Antimicrobial peptide Meucin-18 (69 aa).

The signal sequence occupies residues 1-16 (MVIFLAYFLVVNESEA). A propeptide spanning residues 38–69 (ERSVMNRDLENLFDPYQRNLEMDRLLKQLRNY) is cleaved from the precursor.

The protein belongs to the non-disulfide-bridged peptide (NDBP) superfamily. Medium-length antimicrobial peptide (group 3) family. Expressed by the venom gland.

The protein localises to the secreted. Its subcellular location is the target cell membrane. Amphipathic peptide that exhibits extensive cytolytic activities against both prokaryotic and eukaryotic cells. Acts by fastly disrupting the bacterial membrane. Is more potent against Gram-positive bacteria than against Gram-negative bacteria, and fungi (LC=25.1-8.3 uM). Shows potent activity against penicillin (MIC=3.0 uM) and methicillin (MIC=1.5-3.0 uM) resistant bacteria. Is lethal to the fungus Beauveria sp (LC=1.9 uM), a highly lethal pathogenic fungus to insects and resistant to many AMPs. Shows hemolytic activity against rabbit erythrocytes (37.7% of inhibition at 6.25 uM) and cytolysis against rat dorsal root ganglions. May act by disrupting the integrity of the bacterial cell membrane. Antibiotic activity is not affected by major negatively charged components of the prokaryotic cell wall (e.g. lipopolysaccharides and lipoteichoic acid). In vivo, intravenous injection into mice tail provokes uncomfortable symptoms with a death rate of 12.5%. In vivo, in a mouse model of lethal peritonitis, shows potent antibiotic activity without cytotoxicity, improving the survival rate. The protein is Antimicrobial peptide Meucin-18 of Mesobuthus eupeus (Lesser Asian scorpion).